We begin with the raw amino-acid sequence, 83 residues long: Alpha-conotoxin QcIA (83 aa).

Residues 1–21 form the signal peptide; it reads MGMRMMFTLFLLAVLSTTVVS. The propeptide occupies 22-48; it reads FTLDRASNGRDAAADSKAADQIAQTVR. 2 disulfides stabilise this stretch: Cys51–Cys57 and Cys52–Cys65. The segment at 53-55 is ser-Xaa-Pro motif, crucial for potent interaction with nAChR; it reads SNP. The propeptide occupies 66-83; the sequence is RRTLMLQNPLNHDMSPSA.

The protein belongs to the conotoxin A superfamily. In terms of tissue distribution, expressed by the venom duct.

It localises to the secreted. In terms of biological role, alpha-conotoxins bind to the nicotinic acetylcholine receptors (nAChR) and inhibit them. A synthetic amidated version of this toxin potently and preferentially antagonizes neuronal rat alpha-3-beta-2 (IC(50)=55.7 nM) and alpha-6/alpha-3-beta-4 (IC(50)=90.69 nM) nAChRs. The protein is Alpha-conotoxin QcIA of Conus quercinus (Oak cone).